Here is a 268-residue protein sequence, read N- to C-terminus: 4-hydroxy-tetrahydrodipicolinate reductase (268 aa).

7 to 12 serves as a coordination point for NAD(+); sequence GANGRM. Residue Arg-34 participates in NADP(+) binding. NAD(+) is bound by residues 97–99 and 121–124; these read GTT and SENM. His-155 serves as the catalytic Proton donor/acceptor. (S)-2,3,4,5-tetrahydrodipicolinate is bound at residue His-156. The Proton donor role is filled by Lys-159. 165–166 contributes to the (S)-2,3,4,5-tetrahydrodipicolinate binding site; the sequence is GT.

The protein belongs to the DapB family.

The protein localises to the cytoplasm. The enzyme catalyses (S)-2,3,4,5-tetrahydrodipicolinate + NAD(+) + H2O = (2S,4S)-4-hydroxy-2,3,4,5-tetrahydrodipicolinate + NADH + H(+). The catalysed reaction is (S)-2,3,4,5-tetrahydrodipicolinate + NADP(+) + H2O = (2S,4S)-4-hydroxy-2,3,4,5-tetrahydrodipicolinate + NADPH + H(+). Its pathway is amino-acid biosynthesis; L-lysine biosynthesis via DAP pathway; (S)-tetrahydrodipicolinate from L-aspartate: step 4/4. Functionally, catalyzes the conversion of 4-hydroxy-tetrahydrodipicolinate (HTPA) to tetrahydrodipicolinate. The chain is 4-hydroxy-tetrahydrodipicolinate reductase from Bartonella bacilliformis (strain ATCC 35685 / KC583 / Herrer 020/F12,63).